A 77-amino-acid polypeptide reads, in one-letter code: Sec-independent protein translocase protein TatA (77 aa).

A helical transmembrane segment spans residues 1 to 21 (MGSFSIWHWLIVLVIVMLVFG). The tract at residues 46–77 (GEGKAAADPAQSKELRDSTTIDVEAKEKTRQQ) is disordered.

Belongs to the TatA/E family. As to quaternary structure, the Tat system comprises two distinct complexes: a TatABC complex, containing multiple copies of TatA, TatB and TatC subunits, and a separate TatA complex, containing only TatA subunits. Substrates initially bind to the TatABC complex, which probably triggers association of the separate TatA complex to form the active translocon.

It localises to the cell inner membrane. Its function is as follows. Part of the twin-arginine translocation (Tat) system that transports large folded proteins containing a characteristic twin-arginine motif in their signal peptide across membranes. TatA could form the protein-conducting channel of the Tat system. This is Sec-independent protein translocase protein TatA from Cupriavidus necator (strain ATCC 17699 / DSM 428 / KCTC 22496 / NCIMB 10442 / H16 / Stanier 337) (Ralstonia eutropha).